We begin with the raw amino-acid sequence, 396 residues long: MGKEKFSRSKPHVNVGTIGHVDHGKTTLTAAITSVLAAKFGGTAKAYDQIDAAPEEKARGITINTAHVEYETANRHYAHVDCPGHADYVKNMITGAAQMDGAILVVSAADGPMPQTREHILLARQVGVPYIIVFLNKCDMVDDAELLELVEMEVRELLDKYEFPGDTTPIIHGSAKLAMEGDKGPMGEQAIMKLADALDSYIPLPERAIDGAFLMPVEDVFSISGRGTVVTGRVERGIIKVGEEIEIVGIHDTQKTTCTGVEMFRKLLDQGQAGDNVGILLRGTKREDVQRGQVLCKPGSIKPHTHFTGEIYVLSKDEGGRHTPFFNNYRPQFYFRTTDVTGAIELPEGKEMVMPGDNVSIIVKLINPIAMEEGLRFAIREGGKTVGAGVVAKIIA.

In terms of domain architecture, tr-type G spans lysine 10 to glutamate 206. Positions glycine 19 to threonine 26 are G1. Glycine 19–threonine 26 provides a ligand contact to GTP. Threonine 26 provides a ligand contact to Mg(2+). A G2 region spans residues glycine 60–asparagine 64. The G3 stretch occupies residues aspartate 81–glycine 84. Residues aspartate 81–histidine 85 and asparagine 136–aspartate 139 each bind GTP. The G4 stretch occupies residues asparagine 136–aspartate 139. A G5 region spans residues serine 174 to lysine 176.

It belongs to the TRAFAC class translation factor GTPase superfamily. Classic translation factor GTPase family. EF-Tu/EF-1A subfamily. Monomer.

It is found in the cytoplasm. It catalyses the reaction GTP + H2O = GDP + phosphate + H(+). In terms of biological role, GTP hydrolase that promotes the GTP-dependent binding of aminoacyl-tRNA to the A-site of ribosomes during protein biosynthesis. The protein is Elongation factor Tu 1 of Albidiferax ferrireducens (strain ATCC BAA-621 / DSM 15236 / T118) (Rhodoferax ferrireducens).